The sequence spans 357 residues: Sorbitol dehydrogenase 1 (357 aa).

Cys43 is a binding site for Zn(2+). Tyr49 contributes to the substrate binding site. His68 and Glu69 together coordinate Zn(2+). Residue Glu154 participates in substrate binding. NAD(+) is bound by residues Asp202, Lys207, Val275–Met277, and Cys299–Arg301. Residues Arg301 and Tyr302 each contribute to the substrate site.

This sequence belongs to the zinc-containing alcohol dehydrogenase family. Homotetramer. Zn(2+) serves as cofactor.

The catalysed reaction is keto-D-fructose + NADH + H(+) = D-sorbitol + NAD(+). It carries out the reaction xylitol + NAD(+) = D-xylulose + NADH + H(+). Functionally, polyol dehydrogenase that catalyzes the reversible NAD(+)-dependent oxidation of various sugar alcohols. Is active with D-sorbitol (D-glucitol) and xylitol as substrates, leading to the C2-oxidized product D-fructose and D-xylulose, respectively. Is likely involved in the utilization of D-sorbitol as a sole carbon source for growth. Has no activity on mannitol and primary alcohols such as ethanol. In Saccharomyces cerevisiae (strain ATCC 204508 / S288c) (Baker's yeast), this protein is Sorbitol dehydrogenase 1 (SOR1).